Here is a 511-residue protein sequence, read N- to C-terminus: FAD-dependent monooxygenase AOL_s00215g279 (511 aa).

An N-terminal signal peptide occupies residues Met1–Ala17. One can recognise an FAD-binding PCMH-type domain in the interval Cys85 to Ser256. A Pros-8alpha-FAD histidine modification is found at His122.

The protein belongs to the oxygen-dependent FAD-linked oxidoreductase family.

The protein operates within secondary metabolite biosynthesis; terpenoid biosynthesis. Its function is as follows. FAD-dependent monooxygenase; part of the gene cluster that mediates the biosynthesis of sesquiterpenyl epoxy-cyclohexenoids (SECs) such as anthrobotrisins and arthrosporols, metabolites that possess a novel hybrid carbon skeleton consisting of a polyketide-derived epoxycyclohexenol combined with a terpenoid-derived monocyclic sesquiterpenol substructure (PKS-PTS hybrid). The SEC pathway plays an important role for fungal soil colonization via decreasing fungal nematode-capturing ability. Within the pathway, the FAD-dependent monooxygenase AOL_s00215g279 plays a role in the oxygenation of the phenol moiety, most likely in the epoxy formation. The pathway begins with the biosynthesis of 6-methylsalicylic acid (6-MSA), the first precursor of the polyketide-derived epoxycyclohexenol in arthrosporols, by the polyketide synthase (PKS) AOL_s00215g283 via condensation of 1 acetate and 3 malonate units. The 6-methylsalicylic acid decarboxylase AOL_s00215g281 then catalyzes the decarboxylation of 6-methylsalicylic acid to yield m-cresol. The cytochrome P450 monooxygenase AOL_s00215g282 further oxidizes m-cresol to yield toluquinol. With the assistance of the oxidoreductase AOL_s00215g277, the polyprenyl transferase AOL_s00215g276 catalyzes the farnesylation of toluquinol to produce farnesyl hydroquinone, the hybrid precursor for biosynthesis of SECs. Farnesyl hydroquinone undergoes epoxidation and then subsequent dehydrogenation to form farnesyl epoxy-quinone, the first and simplest SEC. The cytochrome P450 monooxygenase AOL_s00215g278 and the FAD-dependent monooxygenase AOL_s00215g279 might be involved in the oxygenation of the phenol moiety, most likely in the epoxy formation. The cytochrome P450 monooxygenases AOL_s00215g274 and AOL_s00215g280 are involved in specific regional ketone reductions at respectively C-4 and C-1 of farnesyl epoxy-quinone PubMed:33823587. The sequence is that of FAD-dependent monooxygenase AOL_s00215g279 from Arthrobotrys oligospora (strain ATCC 24927 / CBS 115.81 / DSM 1491) (Nematode-trapping fungus).